Consider the following 894-residue polypeptide: MSPEKSQEESPEEDTERTERKPMVKDAFKDISIYFTKEEWAEMGDWEKTRYRNVKRNYNALITIGLRATRPAFMCHRRQAIKLQVDDTEDSDEEWTPRQQVKPPWMALRVEQRKHQKGMPKASFSNESSLKELSRTANLLNASGSEQAQKPVSPSGEASTSGQHSRLKLELRKKETERKMYSLRERKGHAYKEVSEPQDDDYLYCEMCQNFFIDSCAAHGPPTFVKDSAVDKGHPNRSALSLPPGLRIGPSGIPQAGLGVWNEASDLPLGLHFGPYEGRITEDEEAANNGYSWLITKGRNCYEYVDGKDKSWANWMRYVNCARDDEEQNLVAFQYHRQIFYRTCRVIRPGCELLVWYGDEYGQELGIKWGSKWKKELMAGREPKPEIHPCPSCCLAFSSQKFLSQHVERNHSSQNFPGPSARKLLQPENPCPGDQNQEQQYPDPHSRNDKTKGQEIKERSKLLNKRTWQREISRAFSSPPKGQMGSCRVGKRIMEEESRTGQKVNPGNTGKLFVGVGISRIAKVKYGECGQGFSVKSDVITHQRTHTGEKLYVCRECGRGFSWKSHLLIHQRIHTGEKPYVCRECGRGFSWQSVLLTHQRTHTGEKPYVCRECGRGFSRQSVLLTHQRRHTGEKPYVCRECGRGFSRQSVLLTHQRRHTGEKPYVCRECGRGFSWQSVLLTHQRTHTGEKPYVCRECGRGFSWQSVLLTHQRTHTGEKPYVCRECGRGFSNKSHLLRHQRTHTGEKPYVCRECGRGFRDKSHLLRHQRTHTGEKPYVCRECGRGFRDKSNLLSHQRTHTGEKPYVCRECGRGFSNKSHLLRHQRTHTGEKPYVCRECGRGFRNKSHLLRHQRTHTGEKPYVCRECGRGFSDRSSLCYHQRTHTGEKPYVCREDE.

Disordered stretches follow at residues 1-23 (MSPE…RKPM) and 143-174 (SGSE…LRKK). Residues 23 to 86 (MVKDAFKDIS…RRQAIKLQVD (64 aa)) form the KRAB-related domain. A compositionally biased stretch (polar residues) spans 143–164 (SGSEQAQKPVSPSGEASTSGQH). Zn(2+) contacts are provided by Cys205, Cys208, Cys216, and His219. Residues 244–358 (PGLRIGPSGI…PGCELLVWYG (115 aa)) enclose the SET domain. S-adenosyl-L-methionine is bound by residues 256-258 (AGL), Tyr291, and 320-321 (NC). Residue 288-294 (NNGYSWL) participates in substrate binding. Residue Tyr357 participates in substrate binding. An N6,N6,N6-trimethyllysine; alternate modification is found at Lys368. An N6-methyllysine; alternate modification is found at Lys368. N6-methyllysine is present on residues Lys372 and Lys374. The C2H2-type 1 zinc finger occupies 388-411 (HPCPSCCLAFSSQKFLSQHVERNH). The Zn(2+) site is built by Cys390, Cys393, His406, and His411. The segment at 408 to 469 (ERNHSSQNFP…SKLLNKRTWQ (62 aa)) is disordered. Over residues 444-461 (PHSRNDKTKGQEIKERSK) the composition is skewed to basic and acidic residues. The segment at 524–546 (VKYGECGQGFSVKSDVITHQRTH) adopts a C2H2-type 2; degenerate zinc-finger fold. 12 consecutive C2H2-type zinc fingers follow at residues 552–574 (YVCR…QRIH), 580–602 (YVCR…QRTH), 608–630 (YVCR…QRRH), 636–658 (YVCR…QRRH), 664–686 (YVCR…QRTH), 692–714 (YVCR…QRTH), 720–742 (YVCR…QRTH), 748–770 (YVCR…QRTH), 776–798 (YVCR…QRTH), 804–826 (YVCR…QRTH), 832–854 (YVCR…QRTH), and 860–882 (YVCR…QRTH). Cys722, Cys725, His738, His742, Cys750, Cys753, His766, His770, Cys778, Cys781, His794, His798, Cys806, Cys809, His822, and His826 together coordinate Zn(2+). The DNA-binding stretch occupies residues 730 to 820 (SNKSHLLRHQ…RGFSNKSHLL (91 aa)).

It belongs to the class V-like SAM-binding methyltransferase superfamily. As to quaternary structure, homodimer. Interacts with EHMT2 and CDYL; interaction only takes place when PRDM9 is bound to hotspot DNA. Interacts with CXXC1; this interaction does not link PRDM9-activated recombination hotspot sites with DSB machinery and is not required for the hotspot recognition pathway. Forms a complex with EWSR1, REC8, SYCP3 and SYCP1; complex formation is dependent of phosphorylated form of REC8 and requires PRDM9 bound to hotspot DNA; EWSR1 joins PRDM9 with the chromosomal axis through REC8. Post-translationally, mono-methylated; automethylated. Tri-methylated; automethylated. Mono-methylation is predominant; automethylation is lower and slower than H3 peptide methylation and is in a highest S-adenosyl-L-methionine concentration-dependent. There are two major sites for automethylation at Lys-368 and Lys-374. Lysines can be simultaneously methylated, such as Lys-368(me3)/Lys-372(me1), Lys-368(me1)/Lys-374(me1) and Lys-368(me1)/Lys-372(me1)/Lys-374(me1). Automethylation is an intramolecular (cis) process.

It is found in the nucleus. The protein localises to the chromosome. The enzyme catalyses L-lysyl-[protein] + S-adenosyl-L-methionine = N(6)-methyl-L-lysyl-[protein] + S-adenosyl-L-homocysteine + H(+). It carries out the reaction N(6)-methyl-L-lysyl-[protein] + S-adenosyl-L-methionine = N(6),N(6)-dimethyl-L-lysyl-[protein] + S-adenosyl-L-homocysteine + H(+). The catalysed reaction is L-lysyl(4)-[histone H3] + 3 S-adenosyl-L-methionine = N(6),N(6),N(6)-trimethyl-L-lysyl(4)-[histone H3] + 3 S-adenosyl-L-homocysteine + 3 H(+). It catalyses the reaction L-lysyl(36)-[histone H3] + 3 S-adenosyl-L-methionine = N(6),N(6),N(6)-trimethyl-L-lysyl(36)-[histone H3] + 3 S-adenosyl-L-homocysteine + 3 H(+). The enzyme catalyses L-lysyl(9)-[histone H3] + 3 S-adenosyl-L-methionine = N(6),N(6),N(6)-trimethyl-L-lysyl(9)-[histone H3] + 3 S-adenosyl-L-homocysteine + 3 H(+). It carries out the reaction L-lysyl(20)-[histone H4] + S-adenosyl-L-methionine = N(6)-methyl-L-lysyl(20)-[histone H4] + S-adenosyl-L-homocysteine + H(+). The catalysed reaction is N(6)-methyl-L-lysyl(20)-[histone H4] + S-adenosyl-L-methionine = N(6),N(6)-dimethyl-L-lysyl(20)-[histone H4] + S-adenosyl-L-homocysteine + H(+). With respect to regulation, inhibited by suramin with an IC(50) of 4.1 uM. Functionally, histone methyltransferase that sequentially mono-, di-, and tri-methylates both 'Lys-4' (H3K4) and 'Lys-36' (H3K36) of histone H3 to produce respectively trimethylated 'Lys-4' (H3K4me3) and trimethylated 'Lys-36' (H3K36me3) histone H3 and plays a key role in meiotic prophase by determining hotspot localization thereby promoting meiotic recombination. Can also methylate all four core histones with H3 being the best substrate and the most highly modified. Is also able, on one hand, to mono and di-methylate H4K20 and on other hand to trimethylate H3K9 with the di-methylated H3K9 as the best substrate. During meiotic prophase, binds specific DNA sequences through its zinc finger domains thereby determining hotspot localization where it promotes local H3K4me3 and H3K36me3 enrichment on the same nucleosomes through its histone methyltransferase activity. Thereby promotes double-stranded breaks (DSB) formation, at this subset of PRDM9-binding sites, that initiates meiotic recombination for the proper meiotic progression. During meiotic progression hotspot-bound PRDM9 interacts with several complexes; in early leptonema binds CDYL and EHMT2 followed by EWSR1 and CXXC1 by the end of leptonema. EWSR1 joins PRDM9 with the chromosomal axis through REC8. In this way, controls the DSB repair pathway, pairing of homologous chromosomes and sex body formation. Moreover plays a central role in the transcriptional activation of genes during early meiotic prophase thanks to H3K4me3 and H3K36me3 enrichment that represents a specific tag for epigenetic transcriptional activation. In addition performs automethylation. Acetylation and phosphorylation of histone H3 attenuate or prevent histone H3 methylation. The chain is Histone-lysine N-methyltransferase PRDM9 from Homo sapiens (Human).